The sequence spans 711 residues: Ribosomal RNA large subunit methyltransferase K/L (711 aa).

The THUMP domain maps to 42–153 (DAQRAVLWSR…KGRATISVDL (112 aa)).

The protein belongs to the methyltransferase superfamily. RlmKL family.

Its subcellular location is the cytoplasm. It carries out the reaction guanosine(2445) in 23S rRNA + S-adenosyl-L-methionine = N(2)-methylguanosine(2445) in 23S rRNA + S-adenosyl-L-homocysteine + H(+). The catalysed reaction is guanosine(2069) in 23S rRNA + S-adenosyl-L-methionine = N(2)-methylguanosine(2069) in 23S rRNA + S-adenosyl-L-homocysteine + H(+). Specifically methylates the guanine in position 2445 (m2G2445) and the guanine in position 2069 (m7G2069) of 23S rRNA. This is Ribosomal RNA large subunit methyltransferase K/L from Xanthomonas campestris pv. campestris (strain B100).